A 185-amino-acid polypeptide reads, in one-letter code: Large ribosomal subunit protein bL25 (185 aa).

The protein belongs to the bacterial ribosomal protein bL25 family. CTC subfamily. As to quaternary structure, part of the 50S ribosomal subunit; part of the 5S rRNA/L5/L18/L25 subcomplex. Contacts the 5S rRNA. Binds to the 5S rRNA independently of L5 and L18.

In terms of biological role, this is one of the proteins that binds to the 5S RNA in the ribosome where it forms part of the central protuberance. This Chlamydia trachomatis serovar D (strain ATCC VR-885 / DSM 19411 / UW-3/Cx) protein is Large ribosomal subunit protein bL25.